We begin with the raw amino-acid sequence, 388 residues long: MSYQPTPEDRFTFGLWTVGWQGRDPFGDATRRALDPVETVQRLAELGAHGVTFHDDDLIPFGSSDTERESHIKRFRQALDATGMTVPMATTNLFTHPVFKDGAFTANDRDVRRYALRKTIRNIDLAAELGAKTYVAWGGREGAESGAAKDVRSALDRMKEAFDLLGEYVTSQGYDLRFAIEPKPNEPRGDILLPTVGHALAFIERLERPELYGVNPEVGHEQMAGLNFPHGIAQALWAGKLFHIDLNGQSGIKYDQDLRFGAGDLRSAFWLVDLLESAGYEGPRHFDFKPPRTEDLDGVWASAAGCMRNYLILKERAAAFRADPEVQAALRASRLDQLAQPTAADGLEDLLADRAAFEDFDVEAAAARGMAFERLDQLAMDHLLGARG.

Active-site residues include His54 and Asp57. Mg(2+) is bound by residues Glu181, Glu217, His220, Asp245, Asp255, Asp257, and Asp287.

The protein belongs to the xylose isomerase family. Homotetramer. Mg(2+) serves as cofactor.

It localises to the cytoplasm. The catalysed reaction is alpha-D-xylose = alpha-D-xylulofuranose. In Streptomyces corchorusii (Streptomyces chibaensis), this protein is Xylose isomerase.